A 415-amino-acid polypeptide reads, in one-letter code: Imidazolonepropionase (415 aa).

Residues His-75 and His-77 each contribute to the Fe(3+) site. 2 residues coordinate Zn(2+): His-75 and His-77. 4-imidazolone-5-propanoate is bound by residues Arg-84, Tyr-147, and His-180. Tyr-147 is a binding site for N-formimidoyl-L-glutamate. Position 245 (His-245) interacts with Fe(3+). Zn(2+) is bound at residue His-245. Gln-248 lines the 4-imidazolone-5-propanoate pocket. Position 320 (Asp-320) interacts with Fe(3+). Residue Asp-320 coordinates Zn(2+). N-formimidoyl-L-glutamate contacts are provided by Asn-322 and Gly-324. A 4-imidazolone-5-propanoate-binding site is contributed by Thr-325.

It belongs to the metallo-dependent hydrolases superfamily. HutI family. It depends on Zn(2+) as a cofactor. Requires Fe(3+) as cofactor.

The protein resides in the cytoplasm. It catalyses the reaction 4-imidazolone-5-propanoate + H2O = N-formimidoyl-L-glutamate. It functions in the pathway amino-acid degradation; L-histidine degradation into L-glutamate; N-formimidoyl-L-glutamate from L-histidine: step 3/3. Catalyzes the hydrolytic cleavage of the carbon-nitrogen bond in imidazolone-5-propanoate to yield N-formimidoyl-L-glutamate. It is the third step in the universal histidine degradation pathway. The chain is Imidazolonepropionase from Photorhabdus laumondii subsp. laumondii (strain DSM 15139 / CIP 105565 / TT01) (Photorhabdus luminescens subsp. laumondii).